Here is a 479-residue protein sequence, read N- to C-terminus: mRNA export factor ICP27 homolog (479 aa).

Residues M1–S15 show a composition bias toward low complexity. 2 disordered regions span residues M1 to V77 and K91 to W210. The span at T35 to G44 shows a compositional bias: acidic residues. A nuclear export signal and interaction with host NXF1 region spans residues D61–H146. Residues K127–R130 form a nuclear localization signal region. Residues E132–G142 are compositionally biased toward basic and acidic residues. The segment at K143 to R145 is nuclear localization signal. Zn(2+)-binding residues include C354, H445, C449, and C454. The CHC2-type zinc-finger motif lies at C354–C454.

The protein belongs to the HHV-1 ICP27 protein family. In terms of assembly, interacts with host XPO1 and with the XPO1 export pathway components small GTPase RAN and nucleoporin NUP214. Interacts with host SPEN, OTT1 and OTT3. Interacts with host SRSF1, SRSF3, SRSF7 and SRPK1. Interacts with host DHX9; this interaction may have an inhibitory effect on virion production. Interacts (via N-terminus) with host NXF1; this interaction plays a role in mRNA export. In terms of processing, phosphorylated by cellular protein kinase CK2.

The protein localises to the host nucleus. It is found in the host cytoplasm. Promotes the nuclear export of a subset of early and late viral mRNAs by interacting with mRNAs and cellular export proteins. Additionally may prevent the establishment of cellular antiviral state, by acting as an alternative splicing factor for cellular RNAs such as STAT1, resulting in a STAT1 mRNA incapable of producing the STAT1alpha isoform. This chain is mRNA export factor ICP27 homolog, found in Homo sapiens (Human).